Here is a 157-residue protein sequence, read N- to C-terminus: Nascent polypeptide-associated complex subunit alpha (157 aa).

The NAC-A/B domain occupies 6-71 (TTDESHIHKT…LGSPVNLHQL (66 aa)). A compositionally biased stretch (basic and acidic residues) spans 81 to 107 (SSKDQEGPGLYDEIHSDPQEDGVKEAE). Residues 81–116 (SSKDQEGPGLYDEIHSDPQEDGVKEAEEITVDPSDE) are disordered. Residues 118–157 (LSEEDIKLISSQVKASRNDIIKALVESEYDVVDAMMKLTK) form the UBA domain.

Belongs to the NAC-alpha family.

Its subcellular location is the cytoplasm. It is found in the nucleus. In terms of biological role, may be involved in mitochondrial protein import by enhancing productive ribosome interactions with the outer mitochondrial membrane and blocks the inappropriate interaction of ribosomes translating non-secretory nascent polypeptides with translocation sites in the membrane of the endoplasmic reticulum. EGD2 may also be involved in transcription regulation. This is Nascent polypeptide-associated complex subunit alpha (EGD2) from Encephalitozoon cuniculi (strain GB-M1) (Microsporidian parasite).